Here is a 587-residue protein sequence, read N- to C-terminus: MTHAPTPPAASNFLRPIIEDDLQANRFQGKLWAGKPGPAALQAQGQPDPARIRTRFPPEPNGYLHIGHAKSICVNFGLARDYGGVCHLRFDDTNPEKEEQEYVDAIIEAVHWLGFDWQADGNDNLYFASDYFEFMYEFAEALVQAGHAYVDEQSAEEIRASRGTLTEPGTDSPWRDRPADESLLRLREMRDGKHPDGSLVLRARIDMASPNINLRDPVMYRVRHATHHRTGNAWCIYPMYSWAHPVEDALEGITHSICTLEFEDQRPFYDWILARLAELGKLARPLPHQYEFARLNLTYVVTSKRKLLQLVREGYVDGWDDPRMPTLFGLRRRGYTPSSIRLFCDRTAVSKSDSRIDYSLLEQAVRDDLDPVAPRSVAVLDPLKLVITNYPEGRSETCSAPRNPHDPQAGVREFPFTRELWIEQDDFREEPPKKYFRLFPGNTVRLKYGYVVRCTGFTKDQSGKVVEVQAEYLPDTKSGTPGADSVKVKGNITWVSAAHAVPAQVHLYDRLFADAHPDGGDKDFLACLNPHSKQTVQAWLEPGIEAVPGATWQFERLGYFTVDSKDSRPEAPVLNRIVTLRDSWQAA.

Residues Pro-58–His-68 carry the 'HIGH' region motif. ATP is bound by residues Glu-59 to Asn-61 and His-65 to Ser-71. L-glutamine-binding residues include Asp-91 and Tyr-240. Residues Thr-259 and Arg-294–Leu-295 each bind ATP. Positions Val-301–Arg-305 match the 'KMSKS' region motif.

The protein belongs to the class-I aminoacyl-tRNA synthetase family. Monomer.

Its subcellular location is the cytoplasm. It carries out the reaction tRNA(Gln) + L-glutamine + ATP = L-glutaminyl-tRNA(Gln) + AMP + diphosphate. In Bordetella bronchiseptica (strain ATCC BAA-588 / NCTC 13252 / RB50) (Alcaligenes bronchisepticus), this protein is Glutamine--tRNA ligase.